Here is a 141-residue protein sequence, read N- to C-terminus: Deoxyuridine 5'-triphosphate nucleotidohydrolase (141 aa).

Belongs to the dUTPase family. Mg(2+) is required as a cofactor.

The catalysed reaction is dUTP + H2O = dUMP + diphosphate + H(+). It participates in pyrimidine metabolism; dUMP biosynthesis; dUMP from dCTP (dUTP route): step 2/2. Functionally, this enzyme is involved in nucleotide metabolism: it produces dUMP, the immediate precursor of thymidine nucleotides and it decreases the intracellular concentration of dUTP so that uracil cannot be incorporated into DNA. This is Deoxyuridine 5'-triphosphate nucleotidohydrolase from Chlorella (PBCV-1).